A 132-amino-acid polypeptide reads, in one-letter code: MQGPMKNTVADFWKVVWQQHSHVIVMLTKIKEGGNEKCHQYWCPYEDNLLVTEEYTIKTLRVTVRPNYIRTFLEITDKTTQRSRKITHFQCLHWPEHSMPSDLAWFIDFIKMTNRVRKAVHEDILGRFQRVF.

The Tyrosine-protein phosphatase domain maps to 1–132 (MQGPMKNTVA…DILGRFQRVF (132 aa)).

The protein belongs to the protein-tyrosine phosphatase family.

The polypeptide is Tyrosine phosphatase-like protein N2 (N4) (Microplitis demolitor (Parasitoid wasp)).